Here is a 99-residue protein sequence, read N- to C-terminus: Large ribosomal subunit protein uL23 (99 aa).

It belongs to the universal ribosomal protein uL23 family. As to quaternary structure, part of the 50S ribosomal subunit. Contacts protein L29, and trigger factor when it is bound to the ribosome.

Its function is as follows. One of the early assembly proteins it binds 23S rRNA. One of the proteins that surrounds the polypeptide exit tunnel on the outside of the ribosome. Forms the main docking site for trigger factor binding to the ribosome. The chain is Large ribosomal subunit protein uL23 from Streptococcus suis (strain 98HAH33).